We begin with the raw amino-acid sequence, 537 residues long: MSFKCIFLTGGVVSSLGKGLTAASLALLLERQGLKVAMLKLDPYLNVDPGTMNPYEHGEVYVTNDGIETDLDLGHYHRFSSVNLSRYSTATSGQIYARVIKKERDGLYLGSTVQVIPHITNEIIEVILECARENHPDVLIVEIGGTVGDIESLPFLEAIRQFRYEHAEDCFSIHMTYVPYLQAAGEVKTKPTQHSVQSLRSIGIIPDAILCRSEAPLSSEVKKKISLFCNVPSTAVFNVVDVEHSIYEMPLMLSQEKISTFITEKLGLFTKKEDLSDWEMLVERLRHPLPNKIRLGLVGKYVQHKDAYKSVFESITHAALSLNCSVELFPLDSDDPHFLETLELCDGCLVPGGFGSRGWEGKIIAAKLCRERGIPYFGICLGMQVLVVEYARHVLHLEHANSTEMDKDTPDPVICMLDWQASLIATGGTMRLGAYPCALSPGSKVYAMYGQPEIMERHRHRYEVNFNYIQQLKDHGLDIVGTCPEQGLCEIVEIKDHPWMIGVQFHPEFLSKLIKPHPLFVGFIEAALLHSRNKTYV.

Positions 1 to 268 (MSFKCIFLTG…STFITEKLGL (268 aa)) are amidoligase domain. Ser-14 contacts CTP. Ser-14 is a binding site for UTP. 15–20 (SLGKGL) is a binding site for ATP. Tyr-55 serves as a coordination point for L-glutamine. ATP is bound at residue Asp-72. Mg(2+)-binding residues include Asp-72 and Glu-142. CTP contacts are provided by residues 149-151 (DIE), 188-193 (KTKPTQ), and Lys-224. UTP is bound by residues 188-193 (KTKPTQ) and Lys-224. A Glutamine amidotransferase type-1 domain is found at 294-533 (RLGLVGKYVQ…IEAALLHSRN (240 aa)). Gly-353 serves as a coordination point for L-glutamine. Cys-380 functions as the Nucleophile; for glutamine hydrolysis in the catalytic mechanism. L-glutamine contacts are provided by residues 381–384 (LGMQ), Glu-404, and Arg-461. Catalysis depends on residues His-506 and Glu-508.

This sequence belongs to the CTP synthase family. Homotetramer.

The catalysed reaction is UTP + L-glutamine + ATP + H2O = CTP + L-glutamate + ADP + phosphate + 2 H(+). It carries out the reaction L-glutamine + H2O = L-glutamate + NH4(+). The enzyme catalyses UTP + NH4(+) + ATP = CTP + ADP + phosphate + 2 H(+). It participates in pyrimidine metabolism; CTP biosynthesis via de novo pathway; CTP from UDP: step 2/2. Its activity is regulated as follows. Allosterically activated by GTP, when glutamine is the substrate; GTP has no effect on the reaction when ammonia is the substrate. The allosteric effector GTP functions by stabilizing the protein conformation that binds the tetrahedral intermediate(s) formed during glutamine hydrolysis. Inhibited by the product CTP, via allosteric rather than competitive inhibition. Its function is as follows. Catalyzes the ATP-dependent amination of UTP to CTP with either L-glutamine or ammonia as the source of nitrogen. Regulates intracellular CTP levels through interactions with the four ribonucleotide triphosphates. The sequence is that of CTP synthase from Chlamydia abortus (strain DSM 27085 / S26/3) (Chlamydophila abortus).